Reading from the N-terminus, the 283-residue chain is Transcription factor bHLH104 (283 aa).

A disordered region spans residues 96–134 (VEINSGSSGGAVKEEQEHLDDDCSRKRARTGSCSRGGGT). Residues 107–120 (VKEEQEHLDDDCSR) show a composition bias toward basic and acidic residues. The region spanning 130–181 (RGGGTKACRERLRREKLNERFMDLSSVLEPGRTPKTDKPAILDDAIRILNQL) is the bHLH domain.

Homodimer. Interacts with BTS and BHLH47/PYE.

It localises to the nucleus. The protein is Transcription factor bHLH104 (BHLH104) of Arabidopsis thaliana (Mouse-ear cress).